The primary structure comprises 178 residues: ATP synthase subunit delta (178 aa).

Belongs to the ATPase delta chain family. In terms of assembly, F-type ATPases have 2 components, F(1) - the catalytic core - and F(0) - the membrane proton channel. F(1) has five subunits: alpha(3), beta(3), gamma(1), delta(1), epsilon(1). F(0) has three main subunits: a(1), b(2) and c(10-14). The alpha and beta chains form an alternating ring which encloses part of the gamma chain. F(1) is attached to F(0) by a central stalk formed by the gamma and epsilon chains, while a peripheral stalk is formed by the delta and b chains.

It localises to the cell inner membrane. F(1)F(0) ATP synthase produces ATP from ADP in the presence of a proton or sodium gradient. F-type ATPases consist of two structural domains, F(1) containing the extramembraneous catalytic core and F(0) containing the membrane proton channel, linked together by a central stalk and a peripheral stalk. During catalysis, ATP synthesis in the catalytic domain of F(1) is coupled via a rotary mechanism of the central stalk subunits to proton translocation. In terms of biological role, this protein is part of the stalk that links CF(0) to CF(1). It either transmits conformational changes from CF(0) to CF(1) or is implicated in proton conduction. This Pseudomonas putida (strain ATCC 700007 / DSM 6899 / JCM 31910 / BCRC 17059 / LMG 24140 / F1) protein is ATP synthase subunit delta.